A 1063-amino-acid polypeptide reads, in one-letter code: MSQTPIKKEESNDQDDKFEFKKYINEGKLPLKADNPKKKPQLGTIQANQPIPSIFDNLFNLFKVINTTYTFLYLRNSLTITFPLLNSSVKQSLKKELTIGDLSQLREICPQIIELNYKSLASLALEINKNVYTDLNPELYTGSTVSQSSEYVLVIELLETQERSSKRRRREGPTMKANIQRQKLDFNNLKKAIELRNQKFLQGIKEYIKKCQLTELDPTQQLLTQSRKNQPVPPDSPSIPNDSIENCNLNTKACSIEELLNEIASESSYEGQIVQEALHTYPAVEAQYGALSRPLSQELINALYTSRNIEKTYKHQADAINHLWNGFHVIVSTSTSSGKSLIYQIPILQSLLEDNQSTAFFVFPTKSLAQDQKKSLIDILSYMPTLKNIRVDTFDGDTPLESRESIIRSANIIFTNPDMLHQTILPNANRWYYFFKNLKLFVLDEAHVYNGIFGVHVAFVLRRMRRIAEYFGNSQYRFVSCSATIEDPLQHMKKIFGVDNIKLINYTSSPSGSKKFVMWNPPYVDPKHPDDGKKSAISEASKLLIKFAEKRVRTIVFCRVRKTCESLMRLVRQELKTKQKGDLLSKIQSYRAGYTVQERRKIESEMFNGKLYGIIATNALELGIDIGSLDAVITIGFPYSLSNLRQQFGRAGRRNKSSLAVYIVETFPVDQFYLKHPILIHTQPNAELTLDLTNEVLLASHLQCAAYELPINIRSDEKFFGNQIQDICEANLEMVEESYRPHPKYLPFPASQVRIRSVSEDMFTLVDVTNDKNVILELLEPFRVALTAYEGAVYVYQGKTFIIRLLNINKRIITAHQVDVEWSTLQRDFTDVDPVRSLMKKTMHGSTNIYFGAVKATLHVFGYFKVNKQKDILDVVDITDHPVEIDSRGFWIDVPWHIIEVLSLKKINGAASIHAAQHALLSLMPIFISNSGNDIRTECKAGEKEYKEAKSERRRPSRLIFYDNCGDSSGAGLCNKAYEHTDELITMAIERIESCDCKVREGCPGCITSSKFEGGVCSGEVLDKVGALILLKMLLCQHVNLDIYADGPEIDSYHALRTLIPSC.

The segment at 224 to 243 is disordered; that stretch reads TQSRKNQPVPPDSPSIPNDS. A Helicase ATP-binding domain is found at 320–503; that stretch reads INHLWNGFHV…KIFGVDNIKL (184 aa). 333 to 340 is a binding site for ATP; the sequence is TSTSSGKS. A DEAH box motif is present at residues 444–447; it reads DEAH. A Helicase C-terminal domain is found at 539–717; that stretch reads EASKLLIKFA…ELPINIRSDE (179 aa).

The protein belongs to the helicase family. HRQ1 subfamily. As to quaternary structure, forms heptamer rings. Interacts with rhp14. Requires Mg(2+) as cofactor.

The protein resides in the nucleus. It carries out the reaction Couples ATP hydrolysis with the unwinding of duplex DNA by translocating in the 3'-5' direction.. The catalysed reaction is ATP + H2O = ADP + phosphate + H(+). In terms of biological role, helicase with 3'-5' helicase activity involved in genome stability. Functions in the nucleotide excision repair (NER) pathway and plays a critical role in DNA interstrand cross-link repair. Unwinds relatively long duplex DNA up to 120-bp and requires a long 3'-tail of at least 70 nucleotides for efficient unwinding of duplex DNA. Shows both processive helicase and DNA strand annealing activities. Affects telomere length by a non-catalytic mechanism, probably through inhibiting telomerase by competing with it for ssDNA binding. This is ATP-dependent helicase hrq1 from Schizosaccharomyces pombe (strain 972 / ATCC 24843) (Fission yeast).